Consider the following 61-residue polypeptide: Metallothionein-1A (61 aa).

Met1 carries the post-translational modification N-acetylmethionine. The beta stretch occupies residues 1 to 29 (MDPNCSCPTGGSCSCAGSCTCKACRCPSC). Residues Cys5, Cys7, Cys13, Cys15, Cys19, Cys21, Cys24, Cys26, Cys29, Cys33, Cys34, Cys36, Cys37, Cys41, Cys44, Cys48, Cys50, and Cys57 each coordinate a divalent metal cation. The interval 30-61 (KKSCCSCCPVGCAKCAQGCVCKGASDKCSCCA) is alpha. Phosphoserine is present on Ser58. The a divalent metal cation site is built by Cys59 and Cys60.

This sequence belongs to the metallothionein superfamily. Type 1 family. As to quaternary structure, monomer.

Metallothioneins have a high content of cysteine residues that bind various heavy metals; these proteins are transcriptionally regulated by both heavy metals and glucocorticoids. The chain is Metallothionein-1A (MT1A) from Bos taurus (Bovine).